The sequence spans 317 residues: Aspartate carbamoyltransferase catalytic subunit (317 aa).

Carbamoyl phosphate-binding residues include Arg64 and Thr65. Lys92 lines the L-aspartate pocket. The carbamoyl phosphate site is built by Arg114, His142, and Gln145. L-aspartate is bound by residues Arg176 and Arg230. 2 residues coordinate carbamoyl phosphate: Gly271 and Pro272.

Belongs to the aspartate/ornithine carbamoyltransferase superfamily. ATCase family. In terms of assembly, heterododecamer (2C3:3R2) of six catalytic PyrB chains organized as two trimers (C3), and six regulatory PyrI chains organized as three dimers (R2).

The catalysed reaction is carbamoyl phosphate + L-aspartate = N-carbamoyl-L-aspartate + phosphate + H(+). The protein operates within pyrimidine metabolism; UMP biosynthesis via de novo pathway; (S)-dihydroorotate from bicarbonate: step 2/3. Functionally, catalyzes the condensation of carbamoyl phosphate and aspartate to form carbamoyl aspartate and inorganic phosphate, the committed step in the de novo pyrimidine nucleotide biosynthesis pathway. The sequence is that of Aspartate carbamoyltransferase catalytic subunit from Nitratidesulfovibrio vulgaris (strain ATCC 29579 / DSM 644 / CCUG 34227 / NCIMB 8303 / VKM B-1760 / Hildenborough) (Desulfovibrio vulgaris).